The sequence spans 377 residues: Serine/threonine-protein phosphatase PP2A-2 catalytic subunit (377 aa).

The tract at residues 1–66 (MDMEIDDPMH…SGIADHKSSK (66 aa)) is disordered. The span at 28–40 (DDGKNNTKARSND) shows a compositional bias: basic and acidic residues. A Phosphoserine modification is found at S38. At T43 the chain carries Phosphothreonine. Mn(2+) contacts are provided by D125, H127, D153, and N185. H186 (proton donor) is an active-site residue. Positions 235 and 309 each coordinate Mn(2+). Residue L377 is modified to Leucine methyl ester.

This sequence belongs to the PPP phosphatase family. PP-2A subfamily. In terms of assembly, inactivated in a complex with phosphatase methylesterase PPE1 (PP2Ai). Interacts with phosphatase 2A activator RRD2, which can reactivate PP2Ai by dissociating the catalytic subunit from the complex. Interacts with TAP42. The cofactor is Mn(2+). Reversibly methyl esterified on Leu-377 by leucine carboxyl methyltransferase 1 (PPM1) and protein phosphatase methylesterase 1 (PPE1). Carboxyl methylation influences the affinity of the catalytic subunit for the different regulatory subunits, thereby modulating the PP2A holoenzyme's substrate specificity, enzyme activity and cellular localization.

It catalyses the reaction O-phospho-L-seryl-[protein] + H2O = L-seryl-[protein] + phosphate. The catalysed reaction is O-phospho-L-threonyl-[protein] + H2O = L-threonyl-[protein] + phosphate. Exact function not known, phosphatase 2A performs an essential cellular function. In Saccharomyces cerevisiae (strain ATCC 204508 / S288c) (Baker's yeast), this protein is Serine/threonine-protein phosphatase PP2A-2 catalytic subunit (PPH22).